Here is a 98-residue protein sequence, read N- to C-terminus: Small ribosomal subunit protein bS6 (98 aa).

It belongs to the bacterial ribosomal protein bS6 family.

Binds together with bS18 to 16S ribosomal RNA. The chain is Small ribosomal subunit protein bS6 from Lactobacillus johnsonii (strain CNCM I-12250 / La1 / NCC 533).